A 943-amino-acid chain; its full sequence is Isoleucine--tRNA ligase (943 aa).

A 'HIGH' region motif is present at residues 58–68 (PYANGTIHIGH). E567 lines the L-isoleucyl-5'-AMP pocket. The 'KMSKS' region signature appears at 608-612 (KMSKS). K611 contributes to the ATP binding site. Residues C906, C909, C926, and C929 each coordinate Zn(2+).

The protein belongs to the class-I aminoacyl-tRNA synthetase family. IleS type 1 subfamily. In terms of assembly, monomer. Requires Zn(2+) as cofactor.

The protein resides in the cytoplasm. The catalysed reaction is tRNA(Ile) + L-isoleucine + ATP = L-isoleucyl-tRNA(Ile) + AMP + diphosphate. Its function is as follows. Catalyzes the attachment of isoleucine to tRNA(Ile). As IleRS can inadvertently accommodate and process structurally similar amino acids such as valine, to avoid such errors it has two additional distinct tRNA(Ile)-dependent editing activities. One activity is designated as 'pretransfer' editing and involves the hydrolysis of activated Val-AMP. The other activity is designated 'posttransfer' editing and involves deacylation of mischarged Val-tRNA(Ile). The sequence is that of Isoleucine--tRNA ligase from Pseudomonas syringae pv. tomato (strain ATCC BAA-871 / DC3000).